A 344-amino-acid chain; its full sequence is Putative [LysW]-lysine/[LysW]-ornithine hydrolase (344 aa).

A Zn(2+)-binding site is contributed by histidine 66. Residue aspartate 68 is part of the active site. Aspartate 90 serves as a coordination point for Zn(2+). Glutamate 117 acts as the Proton acceptor in catalysis. Zn(2+)-binding residues include glutamate 118, glutamate 139, and histidine 297.

It belongs to the peptidase M20A family. LysK subfamily. It depends on Zn(2+) as a cofactor. Requires Co(2+) as cofactor.

It localises to the cytoplasm. It carries out the reaction [amino-group carrier protein]-C-terminal-gamma-(L-lysyl)-L-glutamate + H2O = [amino-group carrier protein]-C-terminal-L-glutamate + L-lysine. It catalyses the reaction [amino-group carrier protein]-C-terminal-gamma-(L-ornithyl)-L-glutamate + H2O = [amino-group carrier protein]-C-terminal-L-glutamate + L-ornithine. It functions in the pathway amino-acid biosynthesis; L-lysine biosynthesis via AAA pathway; L-lysine from L-alpha-aminoadipate (Thermus route): step 5/5. The protein operates within amino-acid biosynthesis; L-arginine biosynthesis. In terms of biological role, catalyzes the release of L-lysine from [LysW]-gamma-L-lysine and the release of L-ornithine from [LysW]-L-ornithine. In Thermococcus kodakarensis (strain ATCC BAA-918 / JCM 12380 / KOD1) (Pyrococcus kodakaraensis (strain KOD1)), this protein is Putative [LysW]-lysine/[LysW]-ornithine hydrolase.